A 494-amino-acid chain; its full sequence is Bifunctional NAD(P)H-hydrate repair enzyme Nnr (494 aa).

An NAD(P)H-hydrate epimerase region spans residues 1 to 221 (MDTIMPLPTH…GVEEVFAQHN (221 aa)). A YjeF N-terminal domain is found at 17-219 (LKQGEQDAAS…GLGVEEVFAQ (203 aa)). The NADPHX 1; for epimerase activity stretch occupies residues 65 to 69 (NNGGD). Asn66 and Asp129 together coordinate K(+). Residues 133 to 139 (GIGLKEV) are NADPHX 1; for epimerase activity. (6S)-NADPHX is bound at residue Asp162. Ser165 provides a ligand contact to K(+). Residues 229 to 494 (DGKLRHSLLP…LLPHLRELLN (266 aa)) form the YjeF C-terminal domain. The interval 229-494 (DGKLRHSLLP…LLPHLRELLN (266 aa)) is ADP-dependent (S)-NAD(P)H-hydrate dehydratase. Residue Gly325 participates in (6S)-NADPHX binding. The segment at 371–377 (HPVEAAR) is NADPHX 2; for dehydratase activity. ADP contacts are provided by residues 408 to 412 (KGAGT) and 427 to 436 (NPGMASGGMG). Asp437 lines the (6S)-NADPHX pocket.

This sequence in the N-terminal section; belongs to the NnrE/AIBP family. It in the C-terminal section; belongs to the NnrD/CARKD family. It depends on K(+) as a cofactor.

It catalyses the reaction (6S)-NADHX + ADP = AMP + phosphate + NADH + H(+). It carries out the reaction (6S)-NADPHX + ADP = AMP + phosphate + NADPH + H(+). The enzyme catalyses (6R)-NADHX = (6S)-NADHX. The catalysed reaction is (6R)-NADPHX = (6S)-NADPHX. Bifunctional enzyme that catalyzes the epimerization of the S- and R-forms of NAD(P)HX and the dehydration of the S-form of NAD(P)HX at the expense of ADP, which is converted to AMP. This allows the repair of both epimers of NAD(P)HX, a damaged form of NAD(P)H that is a result of enzymatic or heat-dependent hydration. This is Bifunctional NAD(P)H-hydrate repair enzyme Nnr (nnr) from Vibrio cholerae serotype O1 (strain ATCC 39315 / El Tor Inaba N16961).